The chain runs to 89 residues: Small ribosomal subunit protein uS15 (89 aa).

Belongs to the universal ribosomal protein uS15 family. Part of the 30S ribosomal subunit. Forms a bridge to the 50S subunit in the 70S ribosome, contacting the 23S rRNA.

Functionally, one of the primary rRNA binding proteins, it binds directly to 16S rRNA where it helps nucleate assembly of the platform of the 30S subunit by binding and bridging several RNA helices of the 16S rRNA. Forms an intersubunit bridge (bridge B4) with the 23S rRNA of the 50S subunit in the ribosome. In Ligilactobacillus salivarius (strain UCC118) (Lactobacillus salivarius), this protein is Small ribosomal subunit protein uS15.